The primary structure comprises 447 residues: Phosphoglucosamine mutase (447 aa).

The active-site Phosphoserine intermediate is Ser-103. Residues Ser-103, Asp-242, Asp-244, and Asp-246 each coordinate Mg(2+). Ser-103 is subject to Phosphoserine.

It belongs to the phosphohexose mutase family. The cofactor is Mg(2+). Activated by phosphorylation.

It catalyses the reaction alpha-D-glucosamine 1-phosphate = D-glucosamine 6-phosphate. Catalyzes the conversion of glucosamine-6-phosphate to glucosamine-1-phosphate. The protein is Phosphoglucosamine mutase of Dinoroseobacter shibae (strain DSM 16493 / NCIMB 14021 / DFL 12).